The sequence spans 62 residues: Photosystem II reaction center protein Z (62 aa).

2 helical membrane-spanning segments follow: residues 8-28 and 41-61; these read TLFA…VVFA and LSGL…NSFV.

It belongs to the PsbZ family. PSII is composed of 1 copy each of membrane proteins PsbA, PsbB, PsbC, PsbD, PsbE, PsbF, PsbH, PsbI, PsbJ, PsbK, PsbL, PsbM, PsbT, PsbY, PsbZ, Psb30/Ycf12, at least 3 peripheral proteins of the oxygen-evolving complex and a large number of cofactors. It forms dimeric complexes.

The protein localises to the plastid. It localises to the chloroplast thylakoid membrane. Functionally, may control the interaction of photosystem II (PSII) cores with the light-harvesting antenna, regulates electron flow through the 2 photosystem reaction centers. PSII is a light-driven water plastoquinone oxidoreductase, using light energy to abstract electrons from H(2)O, generating a proton gradient subsequently used for ATP formation. This chain is Photosystem II reaction center protein Z, found in Stigeoclonium helveticum (Green alga).